A 309-amino-acid chain; its full sequence is Cytochrome c1, heme protein, mitochondrial (309 aa).

A mitochondrion-targeting transit peptide spans 1–61 (MFSNLSKRWA…LYADSLTAEA (61 aa)). The Mitochondrial intermembrane portion of the chain corresponds to 62-262 (MTAAEHGLHA…TFLNWCAEPE (201 aa)). Residues 88-241 (ASIRRGYQVY…DMVEYEDGTP (154 aa)) enclose the Cytochrome c domain. Heme c is bound by residues Cys101, Cys104, and His105. Positions 131-140 (EFEYDDEPDE) are enriched in acidic residues. Positions 131–168 (EFEYDDEPDEQGNPKKRPGKLSDYIPGPYPNEQAARAA) are disordered. Met225 contributes to the heme c binding site. A helical membrane pass occupies residues 263 to 296 (HDERKRLGLKTVIILSSLYLLSIWVKKFKWAGIK). Topologically, residues 297-309 (TRKFVFNPPKPRK) are mitochondrial matrix.

This sequence belongs to the cytochrome c family. In terms of assembly, component of the ubiquinol-cytochrome c oxidoreductase (cytochrome b-c1 complex, complex III, CIII), a multisubunit enzyme composed of 10 subunits. The complex is composed of 3 respiratory subunits cytochrome b (COB), cytochrome c1 (CYT1) and Rieske protein (RIP1), 2 core protein subunits COR1 and QCR2, and 5 low-molecular weight protein subunits QCR6, QCR7, QCR8, QCR9 and QCR10. The complex exists as an obligatory dimer and forms supercomplexes (SCs) in the inner mitochondrial membrane with a monomer or a dimer of cytochrome c oxidase (complex IV, CIV), resulting in 2 different assemblies (supercomplexes III(2)IV and III(2)IV(2)). CYT1 interacts with COX5A at the CIII-CIV interface. Heme c serves as cofactor.

It is found in the mitochondrion inner membrane. It catalyses the reaction a quinol + 2 Fe(III)-[cytochrome c](out) = a quinone + 2 Fe(II)-[cytochrome c](out) + 2 H(+)(out). Its function is as follows. Component of the ubiquinol-cytochrome c oxidoreductase, a multisubunit transmembrane complex that is part of the mitochondrial electron transport chain which drives oxidative phosphorylation. The respiratory chain contains 3 multisubunit complexes succinate dehydrogenase (complex II, CII), ubiquinol-cytochrome c oxidoreductase (cytochrome b-c1 complex, complex III, CIII) and cytochrome c oxidase (complex IV, CIV), that cooperate to transfer electrons derived from NADH and succinate to molecular oxygen, creating an electrochemical gradient over the inner membrane that drives transmembrane transport and the ATP synthase. The cytochrome b-c1 complex catalyzes electron transfer from ubiquinol to cytochrome c, linking this redox reaction to translocation of protons across the mitochondrial inner membrane, with protons being carried across the membrane as hydrogens on the quinol. In the process called Q cycle, 2 protons are consumed from the matrix, 4 protons are released into the intermembrane space and 2 electrons are passed to cytochrome c. Cytochrome c1 is a catalytic core subunit containing a c-type heme. It transfers electrons from the [2Fe-2S] iron-sulfur cluster of the Rieske protein to cytochrome c. This chain is Cytochrome c1, heme protein, mitochondrial (CYT1), found in Saccharomyces cerevisiae (strain ATCC 204508 / S288c) (Baker's yeast).